The primary structure comprises 240 residues: EF-hand domain-containing protein D2 (240 aa).

The tract at residues 1–51 (MATDELASKLSRRLQMEGEGGEATEQPGLNGAAAAAAAEAPDETAQALGSA) is disordered. Residue alanine 2 is modified to N-acetylalanine. Serine 11 bears the Phosphoserine mark. Over residues 32 to 47 (AAAAAAAEAPDETAQA) the composition is skewed to low complexity. Phosphoserine is present on residues serine 74 and serine 76. Residue tyrosine 83 is modified to Phosphotyrosine. EF-hand domains are found at residues 92–127 (KQIK…LGAP) and 128–163 (QTHL…AAAG). 8 residues coordinate Ca(2+): aspartate 105, aspartate 109, glutamate 116, aspartate 141, aspartate 143, aspartate 145, lysine 147, and glutamate 152. Residue lysine 233 is modified to N6-acetyllysine.

In terms of assembly, interacts with CASP9; with inactive form. In terms of tissue distribution, detected in thymus, kidney, spleen, lung, liver and brain. Highest abundance in brain and lowest in kidney and thymus.

The protein resides in the membrane raft. Functionally, may regulate B-cell receptor (BCR)-induced immature and primary B-cell apoptosis. Plays a role as negative regulator of the canonical NF-kappa-B-activating branch. Controls spontaneous apoptosis through the regulation of BCL2L1 abundance. This chain is EF-hand domain-containing protein D2 (Efhd2), found in Mus musculus (Mouse).